We begin with the raw amino-acid sequence, 908 residues long: Chloride channel protein 2 (908 aa).

Over 1–95 (MAAATAAAAA…RCHKFLVSRV (95 aa)) the chain is Cytoplasmic. An essential for channel gating by both voltage and cell volume region spans residues 24 to 42 (QYEQTLMYGRYTQELGAFA). T28 is modified (phosphothreonine). The tract at residues 44 to 57 (EEAARIRLGGPEPW) is modulates channel gating by both voltage and cell volume. The next 2 helical transmembrane spans lie at 96–129 (GEDW…AQQW) and 138–163 (ILLQ…TQIL). A Selectivity filter part_1 motif is present at residues 169–173 (GSGIP). S170 contributes to the chloride binding site. The segment at residues 172 to 179 (IPEMKTIL) is an intramembrane region (helical). 2 helical membrane passes run 188-206 (LTLK…ALGS) and 213-231 (EGPF…SKFL). The Selectivity filter part_2 motif lies at 211 to 215 (GKEGP). 2 consecutive intramembrane regions (helical) follow at residues 247–259 (MLAA…VGCC) and 263–271 (PIGGVLFSI). 5 helical membrane passes run 283 to 303 (YWRG…LAVW), 329 to 357 (LPAF…VQVM), 366 to 385 (FLMR…ISTL), 437 to 457 (ANVF…SALA), and 465 to 488 (GAFM…MAAW). The short motif at 465-469 (GAFMP) is the Selectivity filter part_3 element. F467 contributes to the chloride binding site. Residues 505–519 (GGYAVVGAAALAGAV) constitute an intramembrane region (helical). The segment at residues 520 to 521 (TH) is an intramembrane region (note=Loop between two helices). Residues 522-533 (TVSTAVIVFELT) constitute an intramembrane region (helical). The note=Loop between two helices intramembrane region spans 534–538 (GQIAH). A helical membrane pass occupies residues 539–556 (ILPVMIAVILANAVAQSL). The Cytoplasmic portion of the chain corresponds to 557 to 908 (QPSLYDSIIR…TPSDSDDKCQ (352 aa)). A chloride-binding site is contributed by Y561. The CBS 1 domain maps to 592-650 (MVRDVPHVALSCTFRDLRLALHRTKGRMLALVESPESMILLGSIERSQVVALLGAQLSP). Over residues 653-662 (RRQHMQKLRK) the composition is skewed to basic residues. Residues 653-722 (RRQHMQKLRK…NSTSLQEGTT (70 aa)) form a disordered region. Over residues 666–680 (SPPSDQESPPSSETS) the composition is skewed to low complexity. Over residues 681–690 (IRFQVNTEDS) the composition is skewed to polar residues. Over residues 698-707 (QTHKPLKPAL) the composition is skewed to basic residues. Residues 711-722 (PSNSTSLQEGTT) are compositionally biased toward polar residues. S768 carries the post-translational modification Phosphoserine. The region spanning 800–860 (IDPAPFQLVE…GSVTAQGVKV (61 aa)) is the CBS 2 domain. A Basolateral membrane sorting motif is present at residues 822-823 (LL). The interval 866-908 (SFRDSATSSSDTETTEVHALWGPRSRHGLPREGTPSDSDDKCQ) is disordered.

This sequence belongs to the chloride channel (TC 2.A.49) family. ClC-2/CLCN2 subfamily. Homodimer. Interacts with auxiliary subunit HEPACAM. In terms of processing, phosphorylated. Activated by dephosphorylation. As to expression, expressed in the adrenal gland and brain. Expressed in intestinal epithelium (at protein level). Expressed in salivary gland (at protein level).

The protein localises to the cell membrane. The protein resides in the myelin membrane. Its subcellular location is the basolateral cell membrane. It is found in the cell projection. It localises to the dendritic spine membrane. The protein localises to the axon. It catalyses the reaction chloride(in) = chloride(out). The catalysed reaction is thiocyanate(in) = thiocyanate(out). The enzyme catalyses bromide(in) = bromide(out). It carries out the reaction nitrate(in) = nitrate(out). It catalyses the reaction iodide(out) = iodide(in). Its activity is regulated as follows. Common gate kinetics are down-regulated by intracellular ATP. Inhibited by AK-42, a derivative of meclofenamate. Inhibited by Cd(2+). Inhibited by Zn(2+) and PKC activation. Inhibited at acidic pH. CCLN2:HEPACAM channel conductance is up-regulated upon hypo-osmolarity. Functionally, voltage-gated and osmosensitive chloride channel. Forms a homodimeric channel where each subunit has its own ion conduction pathway. Conducts double-barreled currents controlled by two types of gates, two fast glutamate gates that control each subunit independently and a slow common gate that opens and shuts off both subunits simultaneously. Displays inward rectification currents activated upon membrane hyperpolarization and extracellular hypotonicity. Contributes to chloride conductance involved in neuron excitability. In hippocampal neurons, generates a significant part of resting membrane conductance and provides an additional chloride efflux pathway to prevent chloride accumulation in dendrites upon GABA receptor activation. In glia, associates with the auxiliary subunit HEPACAM/GlialCAM at astrocytic processes and myelinated fiber tracts where it may regulate transcellular chloride flux buffering extracellular chloride and potassium concentrations. Regulates aldosterone production in adrenal glands. The opening of CLCN2 channels at hyperpolarized membrane potentials in the glomerulosa causes cell membrane depolarization, activation of voltage-gated calcium channels and increased expression of aldosterone synthase, the rate-limiting enzyme for aldosterone biosynthesis. Contributes to chloride conductance in retinal pigment epithelium involved in phagocytosis of shed photoreceptor outer segments and photoreceptor renewal. Conducts chloride currents at the basolateral membrane of epithelial cells with a role in chloride reabsorption rather than secretion. Permeable to small monovalent anions with chloride &gt; thiocyanate &gt; bromide &gt; nitrate &gt; iodide ion selectivity. The protein is Chloride channel protein 2 (Clcn2) of Mus musculus (Mouse).